The following is a 160-amino-acid chain: Probable transcriptional regulator YgiV (160 aa).

In terms of biological role, represses expression of mcbR. The protein is Probable transcriptional regulator YgiV (ygiV) of Escherichia coli O157:H7.